A 417-amino-acid polypeptide reads, in one-letter code: Transmembrane protease serine 11D (417 aa).

The Cytoplasmic segment spans residues 1-17 (MYRPRSMVSPSRFFNPF). Residues 18–38 (MVALIVIITVGLLAMTAGLLI) traverse the membrane as a helical; Signal-anchor for type II membrane protein segment. The Extracellular portion of the chain corresponds to 39-417 (HFLAFDKRAY…RNWIRQQTGI (379 aa)). The SEA domain maps to 46–162 (RAYFYHSNFH…SNGITSLTDQ (117 aa)). Cystine bridges form between C172/C291, C211/C227, C336/C352, and C363/C392. The 231-residue stretch at 186–416 (IIGGTQAETG…YRNWIRQQTG (231 aa)) folds into the Peptidase S1 domain. Active-site charge relay system residues include H226 and D271. S367 functions as the Charge relay system in the catalytic mechanism.

The protein belongs to the peptidase S1 family. As to quaternary structure, monomer. In terms of tissue distribution, isoform 1 and isoform 2 are expressed in the esophagus, tongue and trachea. Isoform 2 is also highly expressed in the adrenal cortex and heart.

The protein resides in the cell membrane. Its subcellular location is the secreted. May play some biological role in the host defense system on the mucous membrane independently of or in cooperation with other substances in airway mucous or bronchial secretions. Plays a role in the proteolytic processing of ACE2. Preferentially cleaves the C-terminal side of arginine residues at the P1 position of certain peptides. Isoform 2 may play a key role in regulating adrenal proliferation by specifically cleaving N-POMC. The polypeptide is Transmembrane protease serine 11D (Tmprss11d) (Rattus norvegicus (Rat)).